The primary structure comprises 73 residues: MKISCFLLLVLSLSCFQINSVSGIDSVKCFQKNNTCHTIRCPYFQDEVGTCYEGRGKCCQKRLLSIRVPKKKV.

The signal sequence occupies residues 1-23; it reads MKISCFLLLVLSLSCFQINSVSG. Cystine bridges form between Cys-29–Cys-58, Cys-36–Cys-51, and Cys-41–Cys-59.

The protein belongs to the beta-defensin family.

Its subcellular location is the secreted. In terms of biological role, has antibacterial activity. This chain is Beta-defensin 39 (Defb39), found in Rattus norvegicus (Rat).